The primary structure comprises 632 residues: PAN2-PAN3 deadenylation complex subunit PAN3 (632 aa).

Disordered stretches follow at residues methionine 1–leucine 22 and proline 99–leucine 127. Positions methionine 107–glutamine 116 are enriched in basic residues. Residues serine 117 to leucine 127 are compositionally biased toward polar residues. Residues lysine 223–glycine 494 are pseudokinase domain. ATP contacts are provided by residues arginine 270, aspartate 321–threonine 328, and asparagine 397–lysine 398. The stretch at glycine 495–threonine 533 forms a coiled coil. Residues valine 534–arginine 632 form a knob domain region.

This sequence belongs to the protein kinase superfamily. PAN3 family. Homodimer. Forms a heterotrimer with a catalytic subunit PAN2 to form the poly(A)-nuclease (PAN) deadenylation complex. Interacts (via PAM-2 motif) with poly(A)-binding protein (via PABC domain), conferring substrate specificity of the enzyme complex. Interacts with the GW182 family protein ain-1. As to expression, highly expressed in germ cells.

The protein localises to the cytoplasm. It localises to the P-body. Functionally, regulatory subunit of the poly(A)-nuclease (PAN) deadenylation complex, one of two cytoplasmic mRNA deadenylases involved in general and miRNA-mediated mRNA turnover. PAN specifically shortens poly(A) tails of RNA and the activity is stimulated by poly(A)-binding protein (PABP). PAN deadenylation is followed by rapid degradation of the shortened mRNA tails by the CCR4-NOT complex. Deadenylated mRNAs are then degraded by two alternative mechanisms, namely exosome-mediated 3'-5' exonucleolytic degradation, or deadenylation-dependent mRNA decaping and subsequent 5'-3' exonucleolytic degradation by XRN1. PAN3 acts as a positive regulator for PAN activity, recruiting the catalytic subunit PAN2 to mRNA via its interaction with RNA and PABP, and to miRNA targets via its interaction with GW182 family proteins. Within the PAN complex, may positively regulate fertility. This is PAN2-PAN3 deadenylation complex subunit PAN3 from Caenorhabditis elegans.